A 166-amino-acid chain; its full sequence is Crossover junction endodeoxyribonuclease RuvC (166 aa).

Residues aspartate 11, glutamate 70, and aspartate 142 contribute to the active site. 3 residues coordinate Mg(2+): aspartate 11, glutamate 70, and aspartate 142.

Belongs to the RuvC family. Homodimer which binds Holliday junction (HJ) DNA. The HJ becomes 2-fold symmetrical on binding to RuvC with unstacked arms; it has a different conformation from HJ DNA in complex with RuvA. In the full resolvosome a probable DNA-RuvA(4)-RuvB(12)-RuvC(2) complex forms which resolves the HJ. The cofactor is Mg(2+).

It localises to the cytoplasm. The catalysed reaction is Endonucleolytic cleavage at a junction such as a reciprocal single-stranded crossover between two homologous DNA duplexes (Holliday junction).. Functionally, the RuvA-RuvB-RuvC complex processes Holliday junction (HJ) DNA during genetic recombination and DNA repair. Endonuclease that resolves HJ intermediates. Cleaves cruciform DNA by making single-stranded nicks across the HJ at symmetrical positions within the homologous arms, yielding a 5'-phosphate and a 3'-hydroxyl group; requires a central core of homology in the junction. The consensus cleavage sequence is 5'-(A/T)TT(C/G)-3'. Cleavage occurs on the 3'-side of the TT dinucleotide at the point of strand exchange. HJ branch migration catalyzed by RuvA-RuvB allows RuvC to scan DNA until it finds its consensus sequence, where it cleaves and resolves the cruciform DNA. The protein is Crossover junction endodeoxyribonuclease RuvC of Nitratidesulfovibrio vulgaris (strain DP4) (Desulfovibrio vulgaris).